A 66-amino-acid chain; its full sequence is VRDGYIVDDKNCTFFCGRNAYCNDECKKKGGESGYCQWASPYGNACWCYKLPDRVPIKEKGRCNGR.

Residues 2-64 enclose the LCN-type CS-alpha/beta domain; that stretch reads RDGYIVDDKN…VPIKEKGRCN (63 aa). Intrachain disulfides connect Cys-12-Cys-63, Cys-16-Cys-36, Cys-22-Cys-46, and Cys-26-Cys-48. At Asn-64 the chain carries Asparagine amide. The propeptide occupies 65-66; it reads GR.

Belongs to the long (4 C-C) scorpion toxin superfamily. Sodium channel inhibitor family. Alpha subfamily. In terms of tissue distribution, expressed by the venom gland.

It is found in the secreted. Alpha toxins bind voltage-independently at site-3 of sodium channels (Nav) and inhibit the inactivation of the activated channels, thereby blocking neuronal transmission. The sequence is that of Sodium channel alpha-toxin Acra8 from Androctonus crassicauda (Arabian fat-tailed scorpion).